The sequence spans 209 residues: Uracil phosphoribosyltransferase (209 aa).

5-phospho-alpha-D-ribose 1-diphosphate contacts are provided by residues Arg79, Arg104, and 131 to 139 (DPMLATGNS). Uracil contacts are provided by residues Ile194 and 199–201 (GDA). Asp200 serves as a coordination point for 5-phospho-alpha-D-ribose 1-diphosphate.

This sequence belongs to the UPRTase family. Mg(2+) is required as a cofactor.

It catalyses the reaction UMP + diphosphate = 5-phospho-alpha-D-ribose 1-diphosphate + uracil. The protein operates within pyrimidine metabolism; UMP biosynthesis via salvage pathway; UMP from uracil: step 1/1. Allosterically activated by GTP. Its function is as follows. Catalyzes the conversion of uracil and 5-phospho-alpha-D-ribose 1-diphosphate (PRPP) to UMP and diphosphate. This chain is Uracil phosphoribosyltransferase, found in Rhizobium leguminosarum bv. trifolii (strain WSM2304).